The primary structure comprises 156 residues: Ribosomal RNA large subunit methyltransferase H (156 aa).

S-adenosyl-L-methionine contacts are provided by residues L73, G104, and 123 to 128 (LSPLTL).

Belongs to the RNA methyltransferase RlmH family. Homodimer.

The protein resides in the cytoplasm. It carries out the reaction pseudouridine(1915) in 23S rRNA + S-adenosyl-L-methionine = N(3)-methylpseudouridine(1915) in 23S rRNA + S-adenosyl-L-homocysteine + H(+). Specifically methylates the pseudouridine at position 1915 (m3Psi1915) in 23S rRNA. This chain is Ribosomal RNA large subunit methyltransferase H, found in Marinobacter nauticus (strain ATCC 700491 / DSM 11845 / VT8) (Marinobacter aquaeolei).